The primary structure comprises 104 residues: Large ribosomal subunit protein uL24 (104 aa).

This sequence belongs to the universal ribosomal protein uL24 family. In terms of assembly, part of the 50S ribosomal subunit.

Functionally, one of two assembly initiator proteins, it binds directly to the 5'-end of the 23S rRNA, where it nucleates assembly of the 50S subunit. One of the proteins that surrounds the polypeptide exit tunnel on the outside of the subunit. The chain is Large ribosomal subunit protein uL24 from Ectopseudomonas mendocina (strain ymp) (Pseudomonas mendocina).